The chain runs to 161 residues: Nucleotide-binding protein BTH_I0730 (161 aa).

It belongs to the YajQ family.

Functionally, nucleotide-binding protein. This is Nucleotide-binding protein BTH_I0730 from Burkholderia thailandensis (strain ATCC 700388 / DSM 13276 / CCUG 48851 / CIP 106301 / E264).